The following is a 434-amino-acid chain: Ataxin-10 homolog (434 aa).

The protein belongs to the ataxin-10 family.

Its subcellular location is the cytoplasm. It is found in the nucleus. Functionally, may play a role in the regulation of cytokinesis. In Schizosaccharomyces pombe (strain 972 / ATCC 24843) (Fission yeast), this protein is Ataxin-10 homolog (mug160).